The primary structure comprises 2704 residues: G surface protein, allelic form 168 (2704 aa).

An N-terminal signal peptide occupies residues 1–20 (MNNKFIIFSLLLALVASQTY). PSA repeat units follow at residues 112–165 (TLDS…NTCD), 172–231 (ATDK…RICD), 238–297 (TTDD…KTCA), 304–360 (TTNS…KTCA), 400–460 (TTND…DKTC), 468–523 (TTHD…KKQC), 530–590 (TTTH…KACS), 596–667 (FTTT…KSCA), 683–742 (FTFS…KTCA), 747–806 (TSHA…ATCA), 815–881 (DSDT…YALS), 929–994 (LTFA…AAEC), 1003–1061 (LDHS…FANC), 1069–1123 (LTNT…ACLT), 1141–1196 (LTNA…ACLT), 1214–1269 (LTNA…ACLT), 1287–1342 (LTDA…ACLT), 1360–1415 (LTNA…ACLT), 1433–1495 (LTDA…DVTC), 1503–1566 (LDHA…ATDC), 1576–1641 (ITYE…ATTC), 1684–1740 (NHTN…KTCD), 1750–1807 (DDTE…DLNC), 1817–1887 (DTHN…KSCT), 1893–1965 (TTTH…KSCA), 1974–2033 (DDDT…KSCD), 2070–2137 (ATDA…IKNC), 2145–2204 (TSEA…KDCQ), 2209–2274 (TTHA…YTSC), 2348–2419 (YTTH…QSCA), and 2424–2489 (TTHA…LTCA).

It localises to the cell membrane. Functionally, this protein is the surface antigen or immobilization antigen of Paramecium primaurelia. This is G surface protein, allelic form 168 (168G) from Paramecium primaurelia.